We begin with the raw amino-acid sequence, 353 residues long: Phosphoribosylformylglycinamidine cyclo-ligase (353 aa).

Belongs to the AIR synthase family.

Its subcellular location is the cytoplasm. The enzyme catalyses 2-formamido-N(1)-(5-O-phospho-beta-D-ribosyl)acetamidine + ATP = 5-amino-1-(5-phospho-beta-D-ribosyl)imidazole + ADP + phosphate + H(+). It participates in purine metabolism; IMP biosynthesis via de novo pathway; 5-amino-1-(5-phospho-D-ribosyl)imidazole from N(2)-formyl-N(1)-(5-phospho-D-ribosyl)glycinamide: step 2/2. This is Phosphoribosylformylglycinamidine cyclo-ligase from Pseudomonas aeruginosa (strain ATCC 15692 / DSM 22644 / CIP 104116 / JCM 14847 / LMG 12228 / 1C / PRS 101 / PAO1).